We begin with the raw amino-acid sequence, 225 residues long: UPF0758 protein SO_4248 (225 aa).

In terms of domain architecture, MPN spans 102–224; sequence VLTNPDLTRD…IVSFAERGWI (123 aa). Positions 173, 175, and 186 each coordinate Zn(2+). The JAMM motif motif lies at 173–186; sequence HNHPSGIAEPSQAD.

This sequence belongs to the UPF0758 family.

This is UPF0758 protein SO_4248 from Shewanella oneidensis (strain ATCC 700550 / JCM 31522 / CIP 106686 / LMG 19005 / NCIMB 14063 / MR-1).